Reading from the N-terminus, the 177-residue chain is Large ribosomal subunit protein uL6 (177 aa).

Positions 154–177 (PEPYKGKGVRYADEQVRRKEAKKK) are disordered. The segment covering 155 to 171 (EPYKGKGVRYADEQVRR) has biased composition (basic and acidic residues).

Belongs to the universal ribosomal protein uL6 family. As to quaternary structure, part of the 50S ribosomal subunit.

This protein binds to the 23S rRNA, and is important in its secondary structure. It is located near the subunit interface in the base of the L7/L12 stalk, and near the tRNA binding site of the peptidyltransferase center. In Alcanivorax borkumensis (strain ATCC 700651 / DSM 11573 / NCIMB 13689 / SK2), this protein is Large ribosomal subunit protein uL6.